Reading from the N-terminus, the 591-residue chain is Aspartate--tRNA ligase (591 aa).

Residue Glu173 coordinates L-aspartate. The tract at residues 197–200 (QLFK) is aspartate. Arg219 lines the L-aspartate pocket. Residues 219–221 (RDE) and Gln228 each bind ATP. His448 contacts L-aspartate. Residue Glu482 coordinates ATP. Arg489 provides a ligand contact to L-aspartate. 534–537 (GLDR) contributes to the ATP binding site.

This sequence belongs to the class-II aminoacyl-tRNA synthetase family. Type 1 subfamily. As to quaternary structure, homodimer.

It is found in the cytoplasm. It catalyses the reaction tRNA(Asp) + L-aspartate + ATP = L-aspartyl-tRNA(Asp) + AMP + diphosphate. Functionally, catalyzes the attachment of L-aspartate to tRNA(Asp) in a two-step reaction: L-aspartate is first activated by ATP to form Asp-AMP and then transferred to the acceptor end of tRNA(Asp). This Shewanella frigidimarina (strain NCIMB 400) protein is Aspartate--tRNA ligase.